The chain runs to 275 residues: Dermonecrotic toxin SpaSicTox-betaIIA2 (275 aa).

His5 is an active-site residue. The Mg(2+) site is built by Glu25 and Asp27. His41 functions as the Nucleophile in the catalytic mechanism. Intrachain disulfides connect Cys45-Cys51 and Cys47-Cys190. Asp85 is a Mg(2+) binding site.

This sequence belongs to the arthropod phospholipase D family. Class II subfamily. The cofactor is Mg(2+). In terms of tissue distribution, expressed by the venom gland.

It is found in the secreted. The catalysed reaction is an N-(acyl)-sphingosylphosphocholine = an N-(acyl)-sphingosyl-1,3-cyclic phosphate + choline. It carries out the reaction an N-(acyl)-sphingosylphosphoethanolamine = an N-(acyl)-sphingosyl-1,3-cyclic phosphate + ethanolamine. The enzyme catalyses a 1-acyl-sn-glycero-3-phosphocholine = a 1-acyl-sn-glycero-2,3-cyclic phosphate + choline. It catalyses the reaction a 1-acyl-sn-glycero-3-phosphoethanolamine = a 1-acyl-sn-glycero-2,3-cyclic phosphate + ethanolamine. Dermonecrotic toxins cleave the phosphodiester linkage between the phosphate and headgroup of certain phospholipids (sphingolipid and lysolipid substrates), forming an alcohol (often choline) and a cyclic phosphate. This toxin acts on sphingomyelin (SM). It may also act on ceramide phosphoethanolamine (CPE), lysophosphatidylcholine (LPC) and lysophosphatidylethanolamine (LPE), but not on lysophosphatidylserine (LPS), and lysophosphatidylglycerol (LPG). It acts by transphosphatidylation, releasing exclusively cyclic phosphate products as second products. Induces dermonecrosis, hemolysis, increased vascular permeability, edema, inflammatory response, and platelet aggregation. The protein is Dermonecrotic toxin SpaSicTox-betaIIA2 of Sicarius patagonicus (Six-eyed sand spider).